The sequence spans 562 residues: Sulfite reductase [NADPH] hemoprotein beta-component (562 aa).

[4Fe-4S] cluster contacts are provided by C426, C432, C471, and C475. Siroheme is bound at residue C475.

This sequence belongs to the nitrite and sulfite reductase 4Fe-4S domain family. In terms of assembly, alpha(8)-beta(8). The alpha component is a flavoprotein, the beta component is a hemoprotein. Requires siroheme as cofactor. [4Fe-4S] cluster serves as cofactor.

The catalysed reaction is hydrogen sulfide + 3 NADP(+) + 3 H2O = sulfite + 3 NADPH + 4 H(+). The protein operates within sulfur metabolism; hydrogen sulfide biosynthesis; hydrogen sulfide from sulfite (NADPH route): step 1/1. Functionally, component of the sulfite reductase complex that catalyzes the 6-electron reduction of sulfite to sulfide. This is one of several activities required for the biosynthesis of L-cysteine from sulfate. The polypeptide is Sulfite reductase [NADPH] hemoprotein beta-component (Shewanella denitrificans (strain OS217 / ATCC BAA-1090 / DSM 15013)).